The primary structure comprises 370 residues: Vasopressin V2 receptor (370 aa).

Residues 1 to 28 (MLRATTSAVPRALSWPAAPGNGSEREPL) are disordered. Residues 1–37 (MLRATTSAVPRALSWPAAPGNGSEREPLDDRDPLLAR) lie on the Extracellular side of the membrane. The N-linked (GlcNAc...) asparagine glycan is linked to N21. A helical transmembrane segment spans residues 38–62 (VELALLSTVFVAVALSNGLVLGALV). Topologically, residues 63-76 (RRGRRGRWAPMHVF) are cytoplasmic. A helical membrane pass occupies residues 77 to 97 (IGHLCLADLAVALFQVLPQLA). The Extracellular portion of the chain corresponds to 98 to 112 (WDATYRFRGPDALCR). A helical transmembrane segment spans residues 113–134 (AVKYLQMVGMYASSYMILAMTL). The Cytoplasmic portion of the chain corresponds to 135–158 (DRHRAICRPMLAYRHGGGARWNRP). The chain crosses the membrane as a helical span at residues 159–179 (VLVAWAFSLLLSLPQLFIFAQ). At 180–199 (RDVGDGSGVLDCWASFAEPW) the chain is on the extracellular side. The helical transmembrane segment at 200–219 (GLRAYVTWIALMVFVAPALG) threads the bilayer. Topologically, residues 220–270 (IAACQVLIFREIHTSLVPGPAERAGGHRGGRRAGSPREGARVSAAMAKTAR) are cytoplasmic. The chain crosses the membrane as a helical span at residues 271-292 (MTLVIVAVYVLCWAPFFLVQLW). The Extracellular segment spans residues 293 to 307 (SVWDPKAPREGPPFV). The helical transmembrane segment at 308–327 (LLMLLASLNSCTNPWIYASF) threads the bilayer. Residues 328 to 370 (SSSISSELRSLLCCPRRRTPPSLRPQEESCATASSFSARDTSS) are Cytoplasmic-facing. Residues C340 and C341 are each lipidated (S-palmitoyl cysteine). A disordered region spans residues 347–370 (PPSLRPQEESCATASSFSARDTSS). Polar residues predominate over residues 356–370 (SCATASSFSARDTSS).

It belongs to the G-protein coupled receptor 1 family. Vasopressin/oxytocin receptor subfamily. As to quaternary structure, interacts with ARRDC4. Identified in a complex containing at least ARRDC4, V2R and HGS. Interacts with TMEM147.

The protein localises to the cell membrane. In terms of biological role, receptor for arginine vasopressin. The activity of this receptor is mediated by G proteins which activate adenylate cyclase. Involved in renal water reabsorption. The polypeptide is Vasopressin V2 receptor (AVPR2) (Sus scrofa (Pig)).